We begin with the raw amino-acid sequence, 485 residues long: Catalase isozyme 1 (485 aa).

Residues His-58 and Asn-131 contribute to the active site. Tyr-341 serves as a coordination point for heme.

It belongs to the catalase family. As to quaternary structure, homotetramer. Requires heme as cofactor.

It is found in the peroxisome. The enzyme catalyses 2 H2O2 = O2 + 2 H2O. Its function is as follows. Occurs in almost all aerobically respiring organisms and serves to protect cells from the toxic effects of hydrogen peroxide. The chain is Catalase isozyme 1 (CAT1) from Nicotiana plumbaginifolia (Leadwort-leaved tobacco).